Consider the following 155-residue polypeptide: MQTEKPDPSTDPGRGRRLGLDVGTVRIGVAISDPDCILATPVETIQATADDADVQRVVEICRDNFVVEIVVGLPVALRGNHTQSTLNAEEFARLVKEELPDIPVRMVDERMSTMAATHAFHASGVNSKKGRKKIDQAAAVHILQGWLDTRRRALS.

Belongs to the YqgF nuclease family.

The protein localises to the cytoplasm. Functionally, could be a nuclease involved in processing of the 5'-end of pre-16S rRNA. The polypeptide is Putative pre-16S rRNA nuclease (Corynebacterium jeikeium (strain K411)).